A 388-amino-acid polypeptide reads, in one-letter code: Succinate--CoA ligase [ADP-forming] subunit beta (388 aa).

The ATP-grasp domain occupies 9–244 (KQLFARYGMP…KSQEDEREAQ (236 aa)). Residues K46, 53–55 (GRG), E99, T102, and E107 each bind ATP. Mg(2+)-binding residues include N199 and D213. Substrate-binding positions include N264 and 321-323 (GIV).

The protein belongs to the succinate/malate CoA ligase beta subunit family. In terms of assembly, heterotetramer of two alpha and two beta subunits. It depends on Mg(2+) as a cofactor.

The enzyme catalyses succinate + ATP + CoA = succinyl-CoA + ADP + phosphate. It catalyses the reaction GTP + succinate + CoA = succinyl-CoA + GDP + phosphate. Its pathway is carbohydrate metabolism; tricarboxylic acid cycle; succinate from succinyl-CoA (ligase route): step 1/1. Functionally, succinyl-CoA synthetase functions in the citric acid cycle (TCA), coupling the hydrolysis of succinyl-CoA to the synthesis of either ATP or GTP and thus represents the only step of substrate-level phosphorylation in the TCA. The beta subunit provides nucleotide specificity of the enzyme and binds the substrate succinate, while the binding sites for coenzyme A and phosphate are found in the alpha subunit. This chain is Succinate--CoA ligase [ADP-forming] subunit beta, found in Yersinia enterocolitica serotype O:8 / biotype 1B (strain NCTC 13174 / 8081).